A 111-amino-acid polypeptide reads, in one-letter code: uncharacterized protein (111 aa).

4 helical membrane-spanning segments follow: residues 3–23, 24–44, 54–74, and 80–100; these read WVLV…LKHA, DSLL…ILLI, AAYT…GIVL, and AAQM…KLFT.

It belongs to the drug/metabolite transporter (DMT) superfamily. Small multidrug resistance (SMR) (TC 2.A.7.1) family.

Its subcellular location is the cell membrane. This is an uncharacterized protein from Bacillus subtilis (strain 168).